We begin with the raw amino-acid sequence, 94 residues long: UPF0298 protein SEQ_1830 (94 aa).

The protein belongs to the UPF0298 family.

It is found in the cytoplasm. This chain is UPF0298 protein SEQ_1830, found in Streptococcus equi subsp. equi (strain 4047).